A 94-amino-acid chain; its full sequence is Integration host factor subunit beta (94 aa).

This sequence belongs to the bacterial histone-like protein family. As to quaternary structure, heterodimer of an alpha and a beta chain.

Functionally, this protein is one of the two subunits of integration host factor, a specific DNA-binding protein that functions in genetic recombination as well as in transcriptional and translational control. The sequence is that of Integration host factor subunit beta (ihfB) from Dickeya dadantii (strain 3937) (Erwinia chrysanthemi (strain 3937)).